Consider the following 348-residue polypeptide: MALSAYFLLCLSVLGLDAIYGFGFRNGFLELMANSYRERKLSGTAEPLQGNITGTGLDELLGNLIVFYWPVLDGNHPGLSLQAFHFLGAIVAVWVAIQVQSWRSPNRNSLLRSPTLFAMLSQVVAIAVIVPLWCAISIWSSSSPRPITRAVSASAAHSIRLIPISMVLGFGIPTIGMLLPESTHQNLFSKQIAIAVWQIWPIYVALWHWGLRVLFRSRLKEGISVRTACRTACSFAFVCAIIPHAVSWGLSLTLIPTNLLADVLPWQFAGGGTVQVQSMAQGGLWFLQWDHLIGMGSFLLWAMHMRWTVEQQSSFLQTCYLALKVGVLCLISGPCGAAVWLLWEESQF.

A helical transmembrane segment spans residues 2–22 (ALSAYFLLCLSVLGLDAIYGF). N51 is a glycosylation site (N-linked (GlcNAc...) asparagine). 7 helical membrane passes run 77 to 97 (PGLS…WVAI), 116 to 136 (LFAM…WCAI), 161 to 181 (LIPI…LLPE), 191 to 211 (QIAI…HWGL), 235 to 255 (FAFV…LTLI), 283 to 303 (GLWF…LWAM), and 323 to 343 (LKVG…WLLW).

This sequence belongs to the membrane-bound ascI terpene cyclase family.

Its subcellular location is the membrane. The protein operates within mycotoxin biosynthesis. In terms of biological role, hydrolase; part of the gene cluster that mediates the biosynthesis of citreoviridin, an inhibitor of the of F1-ATPase beta-subunit. The HR-PKS ctvA accepts acetyl-CoA as the starter unit and catalyzes eight iterations of malonyl-CoA extension and four iterations of SAM-dependent methylation at C4, C12, C14, and C16. The KR and DH domains selectively act on the first six iterations to generate the hexaene chain. In the last three iterations, the KR and DH domains terminate their functions to yield a beta,delta-diketo ester moiety, which then undergoes intramolecular cyclization to yield an alpha-pyrone intermediate. Subsequently, ctvB methylates the alpha-pyrone hydroxyl group to generate citreomontanin. In order to form the tetrahydrofuran ring with the correct stereochemistry, the terminal alkenes of citreomontanin need to undergo isomerization to yield a (17Z)-hexaene, a step that could be catalyzed by ctvC. The (17Z)-hexaene then undergoes bisepoxidation by ctvC to form a (17R,16R,15S,14R)-bisepoxide moiety. Lastly, ctvD acts as a regioselective hydrolase to form the tetrahydrofuran ring with the substituents in the correct absolute configuration, completing the biosynthesis of citreoviridin. The sequence is that of Terpene cyclase ctvD from Aspergillus terreus (strain NIH 2624 / FGSC A1156).